Consider the following 358-residue polypeptide: Methylthioribose-1-phosphate isomerase (358 aa).

Residues 54–56 (RGA), Arg96, and Gln205 contribute to the substrate site. Asp246 (proton donor) is an active-site residue. 256 to 257 (GK) contacts substrate.

It belongs to the eIF-2B alpha/beta/delta subunits family. MtnA subfamily.

It catalyses the reaction 5-(methylsulfanyl)-alpha-D-ribose 1-phosphate = 5-(methylsulfanyl)-D-ribulose 1-phosphate. The protein operates within amino-acid biosynthesis; L-methionine biosynthesis via salvage pathway; L-methionine from S-methyl-5-thio-alpha-D-ribose 1-phosphate: step 1/6. Its function is as follows. Catalyzes the interconversion of methylthioribose-1-phosphate (MTR-1-P) into methylthioribulose-1-phosphate (MTRu-1-P). The protein is Methylthioribose-1-phosphate isomerase of Pseudomonas putida (strain ATCC 47054 / DSM 6125 / CFBP 8728 / NCIMB 11950 / KT2440).